The chain runs to 535 residues: Putative cysteine ligase BshC (535 aa).

Residues 420–477 (DTFKALKESINSAYKNLQEKLAPLGADFQKLTGENLGRVMAQVKYLEERAQKYHREKN) are a coiled coil.

Belongs to the BshC family.

Functionally, involved in bacillithiol (BSH) biosynthesis. May catalyze the last step of the pathway, the addition of cysteine to glucosamine malate (GlcN-Mal) to generate BSH. In Carboxydothermus hydrogenoformans (strain ATCC BAA-161 / DSM 6008 / Z-2901), this protein is Putative cysteine ligase BshC.